We begin with the raw amino-acid sequence, 375 residues long: 23S rRNA (uracil(747)-C(5))-methyltransferase RlmC (375 aa).

[4Fe-4S] cluster is bound by residues Cys-3, Cys-11, Cys-14, and Cys-87. S-adenosyl-L-methionine contacts are provided by Gln-212, Phe-241, Glu-262, and Asn-307. Cys-334 functions as the Nucleophile in the catalytic mechanism.

This sequence belongs to the class I-like SAM-binding methyltransferase superfamily. RNA M5U methyltransferase family. RlmC subfamily.

It catalyses the reaction uridine(747) in 23S rRNA + S-adenosyl-L-methionine = 5-methyluridine(747) in 23S rRNA + S-adenosyl-L-homocysteine + H(+). Functionally, catalyzes the formation of 5-methyl-uridine at position 747 (m5U747) in 23S rRNA. This is 23S rRNA (uracil(747)-C(5))-methyltransferase RlmC from Escherichia coli O9:H4 (strain HS).